Here is a 471-residue protein sequence, read N- to C-terminus: Glutamate--tRNA ligase (471 aa).

The short motif at 9 to 19 (PSPTGYLHVGG) is the 'HIGH' region element. 4 residues coordinate Zn(2+): Cys-98, Cys-100, Cys-125, and His-127. The short motif at 237–241 (KLSKR) is the 'KMSKS' region element. Lys-240 contributes to the ATP binding site.

Belongs to the class-I aminoacyl-tRNA synthetase family. Glutamate--tRNA ligase type 1 subfamily. In terms of assembly, monomer. Zn(2+) is required as a cofactor.

Its subcellular location is the cytoplasm. The catalysed reaction is tRNA(Glu) + L-glutamate + ATP = L-glutamyl-tRNA(Glu) + AMP + diphosphate. Catalyzes the attachment of glutamate to tRNA(Glu) in a two-step reaction: glutamate is first activated by ATP to form Glu-AMP and then transferred to the acceptor end of tRNA(Glu). The sequence is that of Glutamate--tRNA ligase from Shigella boydii serotype 4 (strain Sb227).